A 258-amino-acid chain; its full sequence is Imidazole glycerol phosphate synthase subunit HisF (258 aa).

Catalysis depends on residues D11 and D130.

This sequence belongs to the HisA/HisF family. As to quaternary structure, heterodimer of HisH and HisF.

The protein resides in the cytoplasm. The enzyme catalyses 5-[(5-phospho-1-deoxy-D-ribulos-1-ylimino)methylamino]-1-(5-phospho-beta-D-ribosyl)imidazole-4-carboxamide + L-glutamine = D-erythro-1-(imidazol-4-yl)glycerol 3-phosphate + 5-amino-1-(5-phospho-beta-D-ribosyl)imidazole-4-carboxamide + L-glutamate + H(+). Its pathway is amino-acid biosynthesis; L-histidine biosynthesis; L-histidine from 5-phospho-alpha-D-ribose 1-diphosphate: step 5/9. In terms of biological role, IGPS catalyzes the conversion of PRFAR and glutamine to IGP, AICAR and glutamate. The HisF subunit catalyzes the cyclization activity that produces IGP and AICAR from PRFAR using the ammonia provided by the HisH subunit. The chain is Imidazole glycerol phosphate synthase subunit HisF from Xanthomonas campestris pv. campestris (strain 8004).